Here is a 64-residue protein sequence, read N- to C-terminus: Putative neurotoxin-G (64 aa).

The signal sequence occupies residues methionine 1–cysteine 19. Intrachain disulfides connect cysteine 25/cysteine 45, cysteine 32/cysteine 54, and cysteine 36/cysteine 56.

Expressed by the venom gland.

The protein localises to the secreted. The sequence is that of Putative neurotoxin-G from Lychas mucronatus (Chinese swimming scorpion).